The chain runs to 356 residues: Cell division control protein 10 (356 aa).

Residues 36-286 (KGFELNVLVV…NNYRKKIFEI (251 aa)) form the Septin-type G domain. The tract at residues 46–53 (GRRGLGTS) is G1 motif. Residues 46–53 (GRRGLGTS) and Thr70 contribute to the GTP site. A G3 motif region spans residues 93-96 (TYHE). The interval 163 to 166 (PKAD) is G4 motif. GTP-binding positions include 164-172 (KADMYTPDE) and Arg235.

The protein belongs to the TRAFAC class TrmE-Era-EngA-EngB-Septin-like GTPase superfamily. Septin GTPase family. As to quaternary structure, component of the septin complex.

Septins are GTPases involved in cytokinesis. The septins localize to the site of cleavage and act as a structural scaffold that recruits different components involved in diverse processes at specific stages during the cell cycle. Septins are also involved in cell morphogenesis, chitin deposition, cell cycle regulation, cell compartmentalization and spore wall formation. This Encephalitozoon cuniculi (strain GB-M1) (Microsporidian parasite) protein is Cell division control protein 10 (CDC10).